An 81-amino-acid chain; its full sequence is uncharacterized protein (81 aa).

This is an uncharacterized protein from Saccharomyces cerevisiae (strain ATCC 204508 / S288c) (Baker's yeast).